The following is a 75-amino-acid chain: Putative defensin-like protein 126 (75 aa).

Residues 1-24 (MSKSTFLFVYIILILGSMVNEIQG) form the signal peptide. 4 cysteine pairs are disulfide-bonded: Cys-29-Cys-73, Cys-38-Cys-57, Cys-43-Cys-67, and Cys-47-Cys-69.

The protein belongs to the DEFL family.

Its subcellular location is the secreted. This is Putative defensin-like protein 126 (LCR6) from Arabidopsis thaliana (Mouse-ear cress).